We begin with the raw amino-acid sequence, 77 residues long: Large ribosomal subunit protein uL29 (77 aa).

Belongs to the universal ribosomal protein uL29 family.

The polypeptide is Large ribosomal subunit protein uL29 (Corynebacterium jeikeium (strain K411)).